The sequence spans 425 residues: MMKLEMICTGEEVLSGQIVDTNAAWFASTMMEHGIEIQRRVTVGDRLEDLIAVFQERSLHADVILVNGGLGPTSDDMSAEAMAKAKGESLVENREWRQHLEDWFTRNNREMPVSNLKQAMLPESAVMVDNPVGTACGFRVKLNRAWLFFTPGVPFELKHMVKEQFIPFIREEFDLDAKVALKKLLTIGHGESSLADKIEPLELPEGITIGYRSSMPHIEIKIFARGEKAIALLPRVTGHIKMVLGTAVVAEDKATLAEEIHTKLLNSGLTLSVAESCTGGMITSQLVDFPGSSSYLQHGLVTYSNESKVRVLGVNPATLDDHGAVSIPTVEEMAKGARAILDSDFALATSGIAGPDGGTEEKPVGTVAIALATRSGVYSQMIKLPRRSRDLVRSLSAAVAYDMLRRELLTEAVIVDYQSIGRFSK.

Belongs to the CinA family.

The protein is CinA-like protein of Shewanella sp. (strain ANA-3).